A 543-amino-acid polypeptide reads, in one-letter code: Phosphoenolpyruvate carboxykinase (ATP) (543 aa).

ATP is bound at residue 244–251 (GLSGTGKT).

Belongs to the phosphoenolpyruvate carboxykinase (ATP) family.

The enzyme catalyses oxaloacetate + ATP = phosphoenolpyruvate + ADP + CO2. Its pathway is carbohydrate biosynthesis; gluconeogenesis. The protein is Phosphoenolpyruvate carboxykinase (ATP) (PCK1) of Kluyveromyces lactis (strain ATCC 8585 / CBS 2359 / DSM 70799 / NBRC 1267 / NRRL Y-1140 / WM37) (Yeast).